Here is a 493-residue protein sequence, read N- to C-terminus: Geraniol 8-hydroxylase (493 aa).

Over 1–6 (MDYLTI) the chain is Lumenal. The helical transmembrane segment at 7–23 (ILTLLFALTLYEAFSYL) threads the bilayer. Residues 24–493 (SRRTKNLPPG…HPLRAVPSTL (470 aa)) lie on the Cytoplasmic side of the membrane. Cys436 is a heme binding site.

Belongs to the cytochrome P450 family. Requires heme as cofactor. In terms of tissue distribution, expressed in roots, stems, leaves and flower buds. Hardly detected in mature flowers and fruits. Expressed in the internal phloem-associated parenchyma.

It is found in the endoplasmic reticulum membrane. It catalyses the reaction (2E)-geraniol + reduced [NADPH--hemoprotein reductase] + O2 = (6E)-8-hydroxygeraniol + oxidized [NADPH--hemoprotein reductase] + H2O + H(+). Hydroxylase involved in the biosynthesis of hydroxygeraniol, a precursor of the terpenoid indole alkaloids such as vinblastine and vincristine. Also able to hydroxylate in vitro nerol and to catalyze 3'-hydroxylation of the flavanone naringenin to form eriodictyol. No activity with apigenin, kaempferol, p-coumaric acid and ferulic acid as substrates. This is Geraniol 8-hydroxylase (CYP76B6) from Catharanthus roseus (Madagascar periwinkle).